We begin with the raw amino-acid sequence, 178 residues long: Actin-related protein 2/3 complex subunit 3-B (178 aa).

This sequence belongs to the ARPC3 family. Component of the Arp2/3 complex composed of actr2/arp2, actr3/arp3, arpc1 (arpc1a or arpc1b), arpc2, arpc3, arpc4 and arpc5.

The protein localises to the cytoplasm. The protein resides in the cytoskeleton. It is found in the cell projection. It localises to the nucleus. Its function is as follows. Component of the Arp2/3 complex, a multiprotein complex that mediates actin polymerization upon stimulation by nucleation-promoting factor (NPF). The Arp2/3 complex mediates the formation of branched actin networks in the cytoplasm, providing the force for cell motility. In addition to its role in the cytoplasmic cytoskeleton, the Arp2/3 complex also promotes actin polymerization in the nucleus, thereby regulating gene transcription and repair of damaged DNA. The Arp2/3 complex promotes homologous recombination (HR) repair in response to DNA damage by promoting nuclear actin polymerization, leading to drive motility of double-strand breaks (DSBs). The protein is Actin-related protein 2/3 complex subunit 3-B (arpc3-b) of Xenopus laevis (African clawed frog).